Consider the following 143-residue polypeptide: Small ribosomal subunit protein uS9A (143 aa).

S2 carries the N-acetylserine modification. K30 is covalently cross-linked (Glycyl lysine isopeptide (Lys-Gly) (interchain with G-Cter in ubiquitin)). Position 34 is a phosphoserine (S34). Glycyl lysine isopeptide (Lys-Gly) (interchain with G-Cter in ubiquitin) cross-links involve residues K47 and K59. At S61 the chain carries Phosphoserine. The residue at position 70 (T70) is a Phosphothreonine. The residue at position 76 (S76) is a Phosphoserine. The interval 123-143 (RPEPKKFGGKGARSRFQKSYR) is disordered. The span at 134–143 (ARSRFQKSYR) shows a compositional bias: basic residues.

It belongs to the universal ribosomal protein uS9 family. Component of the small ribosomal subunit (SSU). Mature yeast ribosomes consist of a small (40S) and a large (60S) subunit. The 40S small subunit contains 1 molecule of ribosomal RNA (18S rRNA) and 33 different proteins (encoded by 57 genes). The large 60S subunit contains 3 rRNA molecules (25S, 5.8S and 5S rRNA) and 46 different proteins (encoded by 81 genes).

Its subcellular location is the cytoplasm. Component of the ribosome, a large ribonucleoprotein complex responsible for the synthesis of proteins in the cell. The small ribosomal subunit (SSU) binds messenger RNAs (mRNAs) and translates the encoded message by selecting cognate aminoacyl-transfer RNA (tRNA) molecules. The large subunit (LSU) contains the ribosomal catalytic site termed the peptidyl transferase center (PTC), which catalyzes the formation of peptide bonds, thereby polymerizing the amino acids delivered by tRNAs into a polypeptide chain. The nascent polypeptides leave the ribosome through a tunnel in the LSU and interact with protein factors that function in enzymatic processing, targeting, and the membrane insertion of nascent chains at the exit of the ribosomal tunnel. This Saccharomyces cerevisiae (strain ATCC 204508 / S288c) (Baker's yeast) protein is Small ribosomal subunit protein uS9A.